We begin with the raw amino-acid sequence, 424 residues long: Glutamate-1-semialdehyde 2,1-aminomutase (424 aa).

The residue at position 263 (Lys263) is an N6-(pyridoxal phosphate)lysine.

Belongs to the class-III pyridoxal-phosphate-dependent aminotransferase family. HemL subfamily. Homodimer. Pyridoxal 5'-phosphate is required as a cofactor.

The protein resides in the cytoplasm. The catalysed reaction is (S)-4-amino-5-oxopentanoate = 5-aminolevulinate. The protein operates within porphyrin-containing compound metabolism; protoporphyrin-IX biosynthesis; 5-aminolevulinate from L-glutamyl-tRNA(Glu): step 2/2. The chain is Glutamate-1-semialdehyde 2,1-aminomutase from Campylobacter jejuni subsp. jejuni serotype O:23/36 (strain 81-176).